An 841-amino-acid polypeptide reads, in one-letter code: Copper-transporting P-type ATPase (841 aa).

6 helical membrane passes run Leu186–Gly206, Ala218–Phe238, Ile256–Ile276, Gly285–Gly305, Ala445–Ile465, and Gly474–Thr494. Asp530 functions as the 4-aspartylphosphate intermediate in the catalytic mechanism. Transmembrane regions (helical) follow at residues Gly602 to Ile622 and Gly638 to Asp658. Asp729 and Asp733 together coordinate Mg(2+). Helical transmembrane passes span Val742–Val762 and Val800–Ala820.

This sequence belongs to the cation transport ATPase (P-type) (TC 3.A.3) family. Type IB subfamily.

It localises to the cell membrane. The enzyme catalyses Cu(2+)(in) + ATP + H2O = Cu(2+)(out) + ADP + phosphate + H(+). Functionally, involved in copper efflux. In Rhizobium leguminosarum bv. viciae, this protein is Copper-transporting P-type ATPase (actP).